The chain runs to 239 residues: Fatty acid metabolism regulator protein (239 aa).

The HTH gntR-type domain occupies 6-74 (QSPAGFAEEY…HGKPTKINNF (69 aa)). The segment at residues 34–53 (ERELSELIGVTRTTLREVLQ) is a DNA-binding region (H-T-H motif).

Homodimer.

The protein resides in the cytoplasm. In terms of biological role, multifunctional regulator of fatty acid metabolism. The sequence is that of Fatty acid metabolism regulator protein from Pectobacterium atrosepticum (strain SCRI 1043 / ATCC BAA-672) (Erwinia carotovora subsp. atroseptica).